Consider the following 178-residue polypeptide: Cytochrome b6-f complex iron-sulfur subunit (178 aa).

The helical transmembrane segment at 20–42 (LLTFGTATGVALGALYPVANYFM) threads the bilayer. Residues 65 to 161 (KTGWLATHQA…VDIEDDAVLV (97 aa)) enclose the Rieske domain. [2Fe-2S] cluster-binding residues include cysteine 107, histidine 109, cysteine 125, and histidine 128. Cysteine 112 and cysteine 127 form a disulfide bridge.

It belongs to the Rieske iron-sulfur protein family. The 4 large subunits of the cytochrome b6-f complex are cytochrome b6, subunit IV (17 kDa polypeptide, PetD), cytochrome f and the Rieske protein, while the 4 small subunits are PetG, PetL, PetM and PetN. The complex functions as a dimer. Requires [2Fe-2S] cluster as cofactor.

The protein localises to the cellular thylakoid membrane. The enzyme catalyses 2 oxidized [plastocyanin] + a plastoquinol + 2 H(+)(in) = 2 reduced [plastocyanin] + a plastoquinone + 4 H(+)(out). In terms of biological role, component of the cytochrome b6-f complex, which mediates electron transfer between photosystem II (PSII) and photosystem I (PSI), cyclic electron flow around PSI, and state transitions. The sequence is that of Cytochrome b6-f complex iron-sulfur subunit from Prochlorococcus marinus (strain MIT 9312).